Reading from the N-terminus, the 379-residue chain is Epoxyqueuosine reductase (379 aa).

D139 serves as the catalytic Proton donor. Residues 181-213 enclose the 4Fe-4S ferredoxin-type domain; that stretch reads IPLPVDQPVEEGCGKCVACMTICPTGAIVEPYT. C193, C196, C199, C203, C219, C246, C249, and C253 together coordinate [4Fe-4S] cluster.

It belongs to the QueG family. Monomer. The cofactor is cob(II)alamin. [4Fe-4S] cluster serves as cofactor.

It localises to the cytoplasm. The enzyme catalyses epoxyqueuosine(34) in tRNA + AH2 = queuosine(34) in tRNA + A + H2O. Its pathway is tRNA modification; tRNA-queuosine biosynthesis. Functionally, catalyzes the conversion of epoxyqueuosine (oQ) to queuosine (Q), which is a hypermodified base found in the wobble positions of tRNA(Asp), tRNA(Asn), tRNA(His) and tRNA(Tyr). The protein is Epoxyqueuosine reductase of Escherichia coli (strain K12).